We begin with the raw amino-acid sequence, 300 residues long: Dihydroorotate dehydrogenase B (NAD(+)), catalytic subunit (300 aa).

Residues Ser20 and 44 to 45 (KS) contribute to the FMN site. Residues Lys44, 68 to 72 (NAMGL), and Asn122 each bind substrate. Asn122 contacts FMN. The active-site Nucleophile is the Cys125. Residues Lys160 and Ile186 each contribute to the FMN site. A substrate-binding site is contributed by 187-188 (NT). Residues Gly212, 238–239 (GG), and 260–261 (GT) contribute to the FMN site.

It belongs to the dihydroorotate dehydrogenase family. Type 1 subfamily. In terms of assembly, heterotetramer of 2 PyrK and 2 PyrD type B subunits. FMN is required as a cofactor.

It localises to the cytoplasm. It catalyses the reaction (S)-dihydroorotate + NAD(+) = orotate + NADH + H(+). It participates in pyrimidine metabolism; UMP biosynthesis via de novo pathway; orotate from (S)-dihydroorotate (NAD(+) route): step 1/1. Catalyzes the conversion of dihydroorotate to orotate with NAD(+) as electron acceptor. In Pyrococcus furiosus (strain ATCC 43587 / DSM 3638 / JCM 8422 / Vc1), this protein is Dihydroorotate dehydrogenase B (NAD(+)), catalytic subunit (pyrD).